The primary structure comprises 3072 residues: Platelet binding protein GspB (3072 aa).

An N-terminal signal peptide occupies residues 1–85 (MFFKRQKGQY…AVLGGAVVTS (85 aa)). 10 disordered regions span residues 117–147 (EAAT…SASS), 182–254 (SESL…APNV), 876–909 (SAST…SVSA), 936–969 (SAST…SVSA), 1024–2085 (SASV…SVSA), 2106–2139 (SAST…SVSA), 2173–2223 (VSAS…SVSA), 2250–2595 (SAST…SVSA), 2625–2965 (TSAS…NASV), and 3014–3045 (SQSL…GESE). Residues 118-127 (AATTLSSTEA) show a composition bias toward polar residues. A ser-rich region 1 (SSR1) region spans residues 123–236 (SSTEANPVES…SSQQSTEASS (114 aa)). Composition is skewed to low complexity over residues 131–147 (ESLS…SASS) and 182–238 (SESL…SSQT). The interval 237–603 (QTGRRRTRRA…GSKFIDTRAG (367 aa)) is basic region (BR). The interval 604-3028 (SISKSQSTSN…ESQSSSASQS (2425 aa)) is ser-rich region 2 (SSR2). The span at 3014–3028 (SQSLSESQSSSASQS) shows a compositional bias: low complexity. Residues 3038-3042 (LPRTG) carry the LPXTG sorting signal motif. Thr-3041 carries the post-translational modification Pentaglycyl murein peptidoglycan amidated threonine. Residues 3042–3072 (GESENKASILALGLGALGLAFKKRKKNESED) constitute a propeptide, removed by sortase.

It belongs to the serine-rich repeat protein (SRRP) family. As to quaternary structure, both SSR domains in the unglycosylated protein bind to Asp2 and Asp3; glycosylated protein binds less well. Interacts with the human cell surface glycoprotein GP1BA. Proteolytically cleaved by a metalloprotease. In terms of processing, both SSR1 and SSR2 domains are glycosylated. A truncated derivative (residues 1-2062) contains 105 nmol per nmol of protein, suggesting at least 10% of the apparent molecular weight is due to carbohydrates. Glucose and N-acetylglucosamine are present in a ratio of 30:73 residues per truncated polypeptide, as well as minor amounts of galactose and N-acetylgalactosamine. Glycosylation occurs intracellularly in the Ser-rich regions SSR1 and SSR2. Glycosylation of SSR2 domain may be required to prevent aggregation of GspB. It is probable that most of the Ser residues in SSR1 and SSR2 are O-GlcNAcylated. Sequential glycosylation by sugar transferases are able to generate complex sugar polymorphisms.

It localises to the secreted. The protein resides in the cell wall. Its function is as follows. Plays a role in virulence and host-pathogen interactions. Mediates binding to human platelets via interaction with the human cell surface glycoprotein GP1BA. Plays a positive role in biofilm formation, possibly by self-association via the basic region (BR). This is Platelet binding protein GspB (gspB) from Streptococcus gordonii.